The following is a 279-amino-acid chain: Thymidylate synthase (279 aa).

Arg133–Arg134 contacts dUMP. Cys154 functions as the Nucleophile in the catalytic mechanism. DUMP is bound by residues Arg178–Asp181, Asn189, and His219–Tyr221. Asp181 contributes to the (6R)-5,10-methylene-5,6,7,8-tetrahydrofolate binding site. Ala278 is a binding site for (6R)-5,10-methylene-5,6,7,8-tetrahydrofolate.

Belongs to the thymidylate synthase family. Bacterial-type ThyA subfamily. Homodimer.

Its subcellular location is the cytoplasm. The catalysed reaction is dUMP + (6R)-5,10-methylene-5,6,7,8-tetrahydrofolate = 7,8-dihydrofolate + dTMP. It participates in pyrimidine metabolism; dTTP biosynthesis. Catalyzes the reductive methylation of 2'-deoxyuridine-5'-monophosphate (dUMP) to 2'-deoxythymidine-5'-monophosphate (dTMP) while utilizing 5,10-methylenetetrahydrofolate (mTHF) as the methyl donor and reductant in the reaction, yielding dihydrofolate (DHF) as a by-product. This enzymatic reaction provides an intracellular de novo source of dTMP, an essential precursor for DNA biosynthesis. The sequence is that of Thymidylate synthase from Streptococcus mutans serotype c (strain ATCC 700610 / UA159).